Here is a 319-residue protein sequence, read N- to C-terminus: Glutathione synthetase (319 aa).

Residues 125–311 (EKLFATLFPQ…IGGLLMDAIE (187 aa)) enclose the ATP-grasp domain. Position 151 to 208 (151 to 208 (FAEQQGDVILKPLDGMGGASIFRHRAGDPNLSVILETLTAHGTQQIMAQGYLPAIKDG)) interacts with ATP. Mg(2+) is bound by residues Glu282 and Asn284.

It belongs to the prokaryotic GSH synthase family. Requires Mg(2+) as cofactor. Mn(2+) is required as a cofactor.

The enzyme catalyses gamma-L-glutamyl-L-cysteine + glycine + ATP = glutathione + ADP + phosphate + H(+). It functions in the pathway sulfur metabolism; glutathione biosynthesis; glutathione from L-cysteine and L-glutamate: step 2/2. The protein is Glutathione synthetase of Pseudomonas syringae pv. tomato (strain ATCC BAA-871 / DC3000).